Consider the following 456-residue polypeptide: MTLLGWLIFLAPWGVAGAQLGRFWHISDLHLDPNYTVSKDPLQVCPSAGSQPVLNAGPWGDYLCDSPWALINSSLYAMKEIEPKPDFILWTGDDTPHVPNESLGEAAVLAIVERLTNLIKEVFPDTKVYAALGNHDFHPKNQFPAQSNRIYNQVAELWRPWLSNESYALFKRGAFYSEKLPGPSRAGRVVVLNTNLYYSNNEQTAGMADPGEQFRWLGDVLSNASRDGEMVYVIGHVPPGFFEKTQNKAWFRESFNEEYLKVIQKHHRVIAGQFFGHHHTDSFRMFYDNTGAPINVMFLTPGVTPWKTTLPGVVDGANNPGIRIFEYDRATLNLKDLVTYFLNLRQANVQETPRWEQEYRLTEAYQVPDASVSSMHTALTRIASEPHILQRYYVYNSVSYNHLTCEDSCRIEHVCAIQHVAFNTYATCLHGLGAKLVPGFLLILTLLPSLHVLEVL.

Residues 1–18 (MTLLGWLIFLAPWGVAGA) form the signal peptide. The Zn(2+) site is built by D28 and H30. N34 is a glycosylation site (N-linked (GlcNAc...) asparagine). C45 and C64 are joined by a disulfide. N72 carries an N-linked (GlcNAc...) asparagine glycan. D93 serves as a coordination point for Zn(2+). The N-linked (GlcNAc...) asparagine glycan is linked to N100. N134 provides a ligand contact to Zn(2+). N-linked (GlcNAc...) asparagine glycans are attached at residues N164 and N223. Positions 236, 277, and 279 each coordinate Zn(2+). Cystine bridges form between C405-C409 and C415-C428.

The protein belongs to the acid sphingomyelinase family. As to quaternary structure, interacts with TLR4, TLR7, TLR8 and TLR9. It depends on Zn(2+) as a cofactor. N-glycosylated. Macrophages and dendritic cells.

It localises to the secreted. Its subcellular location is the cell membrane. Functionally, lipid-modulating phosphodiesterase. Active on the surface of macrophages and dendritic cells and strongly influences macrophage lipid composition and membrane fluidity. Acts as a negative regulator of Toll-like receptor signaling. Has in vitro phosphodiesterase activity, but the physiological substrate is unknown. Lacks activity with phosphocholine-containing lipids, but can cleave CDP-choline, and can release phosphate from ATP and ADP (in vitro). The sequence is that of Acid sphingomyelinase-like phosphodiesterase 3b (Smpdl3b) from Mus musculus (Mouse).